Reading from the N-terminus, the 433-residue chain is MILQPSALLCLSSLWGVIVQASQGQFPVTQNVTVVEGGTINLTCRVDQNDNTSLQWSNPAQQTLYFDDKKALRDNRIELVRASWHELSISISDVSLSDEGQYTCSLFTMPVKTSKAYLMVLGVPENPHISGFTSPVMEGDTIQLTCKSSGSKPAADIRWFKNDQEITDVQKIQQQDSNGKTFTVTSSLVFQGDRKDDGAVIRCRVDHESLTSTPQIAKQVLEIHYTPTVRILPSTPLPQEGQPLILICESKGKPLPEPVLWTKDGGELPDPERMTVNGRELTISFLNKTDNGTYRCEATNSIGQSSAEYVLIINDVPKPLFPTTIIPLFTSATVKTNVAMSTRTTKSAFITKDPNALPGPVATDHALIGGVVAVVVFVTLCSIILIGRYLARHKGTYLTNEAKGAEDAPDADTAIINAEGSQVNAEEKKEYFI.

Positions 1 to 24 (MILQPSALLCLSSLWGVIVQASQG) are cleaved as a signal peptide. Residues 25–365 (QFPVTQNVTV…ALPGPVATDH (341 aa)) lie on the Extracellular side of the membrane. The Ig-like V-type domain occupies 27-114 (PVTQNVTVVE…SLFTMPVKTS (88 aa)). N31, N41, and N51 each carry an N-linked (GlcNAc...) asparagine glycan. 3 disulfide bridges follow: C44/C104, C146/C203, and C248/C296. Ig-like C2-type domains follow at residues 127–217 (PHIS…PQIA) and 227–312 (PTVR…YVLI). Residues N287 and N291 are each glycosylated (N-linked (GlcNAc...) asparagine). A helical membrane pass occupies residues 366–386 (ALIGGVVAVVVFVTLCSIILI). The Cytoplasmic portion of the chain corresponds to 387-433 (GRYLARHKGTYLTNEAKGAEDAPDADTAIINAEGSQVNAEEKKEYFI).

Belongs to the nectin family.

It localises to the membrane. The polypeptide is Cell adhesion molecule 2 (cadm2) (Xenopus tropicalis (Western clawed frog)).